The primary structure comprises 436 residues: Prenyltransferase nscD (436 aa).

It belongs to the tryptophan dimethylallyltransferase family.

It participates in secondary metabolite biosynthesis. In terms of biological role, prenyltransferase; part of the gene cluster that mediates the biosynthesis of neosartoricin B, a prenylated anthracenone that probably exhibits T-cell antiproliferative activity, suggestive of a physiological role as an immunosuppressive agent. The non-reducing polyketide synthase nscA probably synthesizes and cyclizes the decaketide backbone. The hydrolase nscB then mediates the product release through hydrolysis followed by spontaneous decarboxylation. The prenyltransferase nscD catalyzes the addition of the dimethylallyl group to the aromatic C5. The FAD-dependent monooxygenase nscC is then responsible for the stereospecific hydroxylation at C2. Neosartoricin B can be converted into two additional compounds neosartoricins C and D. Neosartoricin C is a spirocyclic compound that is cyclized through the attack of C3 hydroxyl on C14, followed by dehydration. On the other hand, neosartoricin D is a further cyclized compound in which attack of C2 on C14 in neosartoricin C results in the formation of the acetal-containing dioxabicyclo-octanone ring. Both of these compounds are novel and possibly represent related metabolites of the gene cluster. The protein is Prenyltransferase nscD of Trichophyton tonsurans (strain CBS 112818) (Scalp ringworm fungus).